Consider the following 350-residue polypeptide: Phosphate acyltransferase (350 aa).

Belongs to the PlsX family. Homodimer. Probably interacts with PlsY.

Its subcellular location is the cytoplasm. It catalyses the reaction a fatty acyl-[ACP] + phosphate = an acyl phosphate + holo-[ACP]. It functions in the pathway lipid metabolism; phospholipid metabolism. Functionally, catalyzes the reversible formation of acyl-phosphate (acyl-PO(4)) from acyl-[acyl-carrier-protein] (acyl-ACP). This enzyme utilizes acyl-ACP as fatty acyl donor, but not acyl-CoA. This is Phosphate acyltransferase from Chelativorans sp. (strain BNC1).